The chain runs to 258 residues: 4-hydroxy-tetrahydrodipicolinate reductase (258 aa).

Residues 8 to 13 (GGSGKM), 86 to 88 (GTT), and 110 to 113 (ATNM) contribute to the NAD(+) site. His142 functions as the Proton donor/acceptor in the catalytic mechanism. His143 is a binding site for (S)-2,3,4,5-tetrahydrodipicolinate. The Proton donor role is filled by Lys146. (S)-2,3,4,5-tetrahydrodipicolinate is bound at residue 152 to 153 (GT).

The protein belongs to the DapB family.

Its subcellular location is the cytoplasm. It catalyses the reaction (S)-2,3,4,5-tetrahydrodipicolinate + NAD(+) + H2O = (2S,4S)-4-hydroxy-2,3,4,5-tetrahydrodipicolinate + NADH + H(+). The enzyme catalyses (S)-2,3,4,5-tetrahydrodipicolinate + NADP(+) + H2O = (2S,4S)-4-hydroxy-2,3,4,5-tetrahydrodipicolinate + NADPH + H(+). The protein operates within amino-acid biosynthesis; L-lysine biosynthesis via DAP pathway; (S)-tetrahydrodipicolinate from L-aspartate: step 4/4. Catalyzes the conversion of 4-hydroxy-tetrahydrodipicolinate (HTPA) to tetrahydrodipicolinate. The polypeptide is 4-hydroxy-tetrahydrodipicolinate reductase (Campylobacter hominis (strain ATCC BAA-381 / DSM 21671 / CCUG 45161 / LMG 19568 / NCTC 13146 / CH001A)).